Consider the following 275-residue polypeptide: 6-deoxy-6-sulfo-D-fructose transketolase subunit SqwG (275 aa).

Belongs to the transketolase family. In terms of assembly, forms a complex with SqwH. Thiamine diphosphate serves as cofactor.

It carries out the reaction 6-deoxy-6-sulfo-D-fructose + D-glyceraldehyde 3-phosphate = 4-deoxy-4-sulfo-D-erythrose + D-xylulose 5-phosphate. The catalysed reaction is 4-deoxy-4-sulfo-D-erythrulose + D-glyceraldehyde 3-phosphate = sulfoacetaldehyde + D-xylulose 5-phosphate. Its function is as follows. Part of the sulfo-TK pathway, a D-sulfoquinovose degradation pathway that produces 2-hydroxyethane-1-sulfonate (isethionate). Catalyzes two steps of the pathway: the formation of 4-deoxy-4-sulfoerythrose (SE) and xylulose 5-phosphate from 6-deoxy-6-sulfo-D-fructose (SF) and glyceraldehyde 3-phosphate, and the formation of sulfoacetaldehyde (SA) and xylulose 5-phosphate from 4-deoxy-4-sulfo-D-erythrulose (SEu) and glyceraldehyde 3-phosphate. The polypeptide is 6-deoxy-6-sulfo-D-fructose transketolase subunit SqwG (Clostridium sp. (strain MSTE9)).